Consider the following 666-residue polypeptide: Putative L-type lectin-domain containing receptor kinase V.1 (666 aa).

The N-terminal stretch at 1 to 18 is a signal peptide; sequence MVLLLFLVLFFVPESVVC. The Extracellular portion of the chain corresponds to 19–289; that stretch reads QRPNPNGVEF…WIQSPNGILT (271 aa). The interval 27-257 is legume-lectin like; the sequence is EFNTSGNMYT…SHYILGWTFK (231 aa). N29, N74, N123, N176, N204, and N259 each carry an N-linked (GlcNAc...) asparagine glycan. A helical transmembrane segment spans residues 290–310; it reads ISLTVSGVIILIILSLSLWLF. Over 311–666 the chain is Cytoplasmic; sequence LKRKKLLEVL…FTESFVSHGR (356 aa). The Protein kinase domain maps to 344 to 625; it reads FKDTEVLGKG…SVAQLPHNLL (282 aa). ATP contacts are provided by residues 350-358 and K373; that span reads LGKGGFGKV. The active-site Proton acceptor is the D469.

It in the C-terminal section; belongs to the protein kinase superfamily. Ser/Thr protein kinase family. The protein in the N-terminal section; belongs to the leguminous lectin family.

It is found in the cell membrane. It catalyses the reaction L-seryl-[protein] + ATP = O-phospho-L-seryl-[protein] + ADP + H(+). It carries out the reaction L-threonyl-[protein] + ATP = O-phospho-L-threonyl-[protein] + ADP + H(+). This is Putative L-type lectin-domain containing receptor kinase V.1 (LECRK51) from Arabidopsis thaliana (Mouse-ear cress).